Here is a 260-residue protein sequence, read N- to C-terminus: Ribosomal RNA small subunit methyltransferase J (260 aa).

S-adenosyl-L-methionine-binding positions include 101-102 (RD), 117-118 (ER), 153-154 (SS), and aspartate 176.

It belongs to the methyltransferase superfamily. RsmJ family.

It localises to the cytoplasm. It catalyses the reaction guanosine(1516) in 16S rRNA + S-adenosyl-L-methionine = N(2)-methylguanosine(1516) in 16S rRNA + S-adenosyl-L-homocysteine + H(+). Specifically methylates the guanosine in position 1516 of 16S rRNA. In Aliivibrio salmonicida (strain LFI1238) (Vibrio salmonicida (strain LFI1238)), this protein is Ribosomal RNA small subunit methyltransferase J.